The sequence spans 72 residues: Enterobactin biosynthesis protein YbdZ (72 aa).

This sequence belongs to the MbtH-like family.

Its function is as follows. Involved in the biosynthesis of the siderophore enterobactin (enterochelin), which is a macrocyclic trimeric lactone of N-(2,3-dihydroxybenzoyl)-serine. Plays a role in the catalytic function of EntF. It is required for adenylation of amino acids in non-ribosomal peptide biosynthesis. The sequence is that of Enterobactin biosynthesis protein YbdZ from Escherichia coli (strain K12).